The following is a 393-amino-acid chain: Protein TsgA (393 aa).

Helical transmembrane passes span 11–31, 51–71, 78–98, 101–121, 134–154, 162–182, 206–226, 245–265, 273–293, 298–318, 332–352, and 361–381; these read WISF…GMVM, FLNA…EIIP, FGFI…SLAL, AAMF…TFLI, LLFT…VAAF, WYWV…LTFG, IGVL…LGFI, ALVS…SFIL, ILTV…TGTQ, WFIL…ITLG, FILT…GPIV, and LLTA…LGFV.

It belongs to the major facilitator superfamily. TsgA family.

The protein localises to the cell inner membrane. This Salmonella schwarzengrund (strain CVM19633) protein is Protein TsgA.